Reading from the N-terminus, the 389-residue chain is Tryptophan 2,3-dioxygenase (389 aa).

Substrate-binding positions include 60–64 (FIITH) and Arg131. His316 provides a ligand contact to heme. Substrate is bound at residue Thr331.

The protein belongs to the tryptophan 2,3-dioxygenase family. Homotetramer. Dimer of dimers. Requires heme as cofactor.

The enzyme catalyses L-tryptophan + O2 = N-formyl-L-kynurenine. The protein operates within amino-acid degradation; L-tryptophan degradation via kynurenine pathway; L-kynurenine from L-tryptophan: step 1/2. It functions in the pathway pigment biosynthesis; ommochrome biosynthesis. In terms of biological role, heme-dependent dioxygenase that catalyzes the oxidative cleavage of the L-tryptophan (L-Trp) pyrrole ring and converts L-tryptophan to N-formyl-L-kynurenine. Catalyzes the oxidative cleavage of the indole moiety. This Mayetiola destructor (Hessian fly) protein is Tryptophan 2,3-dioxygenase.